A 24-amino-acid chain; its full sequence is U4-ctenitoxin-Co1b (24 aa).

Post-translationally, disulfide bonds are present. Expressed by the venom gland.

It localises to the secreted. Its function is as follows. Omega-agatoxins are antagonists of voltage-gated calcium channels (Cav). The sequence is that of U4-ctenitoxin-Co1b from Ctenus ornatus (Brazilian spider).